Reading from the N-terminus, the 582-residue chain is Inositol transporter 4 (582 aa).

Transmembrane regions (helical) follow at residues 35-55 (GIGG…LLFI), 70-90 (STIV…GGWI), 105-125 (VLFL…VIIV), 128-148 (IFVG…ISEA), 162-182 (GLLI…FVHT), 188-208 (WMLG…LSLP), 290-310 (FVGI…AGYA), 317-337 (ALSL…MMFV), 345-365 (LMII…TVFS), 456-476 (FGFL…PGMG), 494-514 (LGGG…SESF), and 525-545 (GTFL…WLLV).

Belongs to the major facilitator superfamily. Sugar transporter (TC 2.A.1.1) family. As to expression, highly expressed in pollen and phloem companion cells.

The protein resides in the cell membrane. Functionally, plasma membrane inositol-proton symporter. Mediates high-affinity myoinositol-proton symport across the plasma membrane. Active with myoinositol, scylloinositol and D-chiroinositol. Low activity with mucoinositol and alloinositol. In Arabidopsis thaliana (Mouse-ear cress), this protein is Inositol transporter 4 (INT4).